A 225-amino-acid chain; its full sequence is MLKRLKSFLFKMVLILLIAPIVLVGVVKYVDPPIWGWKLSRIVAPPKNYPDSSQHEWVSLTRISKNMQLAVIATEDQKFPHHYGVDFESLFDVISEAGDHGPSRGASTITQQAAKNVFLFPSHSYVRKAYELYFALLMELMWSKERILEVYLNVVEFGPGIYGAEAAAQNYFGVSAKQLSKWQAARLAVVLPNPYRIKVYPQSDYTARRTRWAMNQMSNLGSVQL.

A helical membrane pass occupies residues serine 7–valine 27.

This sequence belongs to the glycosyltransferase 51 family.

The protein resides in the cell inner membrane. The catalysed reaction is [GlcNAc-(1-&gt;4)-Mur2Ac(oyl-L-Ala-gamma-D-Glu-L-Lys-D-Ala-D-Ala)](n)-di-trans,octa-cis-undecaprenyl diphosphate + beta-D-GlcNAc-(1-&gt;4)-Mur2Ac(oyl-L-Ala-gamma-D-Glu-L-Lys-D-Ala-D-Ala)-di-trans,octa-cis-undecaprenyl diphosphate = [GlcNAc-(1-&gt;4)-Mur2Ac(oyl-L-Ala-gamma-D-Glu-L-Lys-D-Ala-D-Ala)](n+1)-di-trans,octa-cis-undecaprenyl diphosphate + di-trans,octa-cis-undecaprenyl diphosphate + H(+). Its pathway is cell wall biogenesis; peptidoglycan biosynthesis. Its function is as follows. Peptidoglycan polymerase that catalyzes glycan chain elongation from lipid-linked precursors. This Vibrio parahaemolyticus serotype O3:K6 (strain RIMD 2210633) protein is Biosynthetic peptidoglycan transglycosylase.